Consider the following 358-residue polypeptide: DnaJ homolog subfamily B member 11 (358 aa).

The first 22 residues, Met-1–Ala-22, serve as a signal peptide directing secretion. The 66-residue stretch at Asp-25–Gly-90 folds into the J domain. Thr-188 is modified (phosphothreonine). Asn-261 carries an N-linked (GlcNAc...) asparagine glycan.

As to quaternary structure, part of a large chaperone multiprotein complex comprising DNAJB11, HSP90B1, HSPA5, HYOU, PDIA2, PDIA4, PDIA6, PPIB, SDF2L1, UGGT1 and very small amounts of ERP29, but not, or at very low levels, CALR nor CANX. Binds to denatured substrates in an ATP-independent manner. Interacts via the J domain with HSPA5 in an ATP-dependent manner. In terms of processing, contains high-mannose Endo H-sensitive carbohydrates. Cys-169, Cys-171, Cys-193 and Cys-196 form intramolecular disulfide bonds. The preferential partner for each Cys is not known. Post-translationally, thr-188 was reported to be phosphorylated upon DNA damage by ATM or ATR; however as this position has been shown to be in the ER lumen, the in vivo relevance is not proven. As to expression, widely expressed.

Its subcellular location is the endoplasmic reticulum lumen. Functionally, as a co-chaperone for HSPA5 it is required for proper folding, trafficking or degradation of proteins. Binds directly to both unfolded proteins that are substrates for ERAD and nascent unfolded peptide chains, but dissociates from the HSPA5-unfolded protein complex before folding is completed. May help recruiting HSPA5 and other chaperones to the substrate. Stimulates HSPA5 ATPase activity. It is necessary for maturation and correct trafficking of PKD1. This is DnaJ homolog subfamily B member 11 (DNAJB11) from Homo sapiens (Human).